The primary structure comprises 230 residues: MKVGIIGAMEQEVALLRSQMNEPTTLQLGGCEFYQGKLAGKEVILTRSGIGKVAASVATSLLLEKFAPDCVINTGSAGGFAQDLHIGDMVIADEMRFHDVDVTAFGYEMGQMAQQPAAFPCDGKLIAVAQDCIAEQGKHQTKVGLICTGDQFMCKPDAIAKARADFPQMLAVEMEGAAIGQVCHMFKVPYLVVRAMSDIAGKEQVESFDAFIEVAGQHSAEMIIKMLGKL.

Glu12 functions as the Proton acceptor in the catalytic mechanism. Residues Gly78, Met153, and 174–175 (ME) each bind substrate. The Proton donor role is filled by Asp198.

The protein belongs to the PNP/UDP phosphorylase family. MtnN subfamily.

The catalysed reaction is S-adenosyl-L-homocysteine + H2O = S-(5-deoxy-D-ribos-5-yl)-L-homocysteine + adenine. The enzyme catalyses S-methyl-5'-thioadenosine + H2O = 5-(methylsulfanyl)-D-ribose + adenine. It carries out the reaction 5'-deoxyadenosine + H2O = 5-deoxy-D-ribose + adenine. It functions in the pathway amino-acid biosynthesis; L-methionine biosynthesis via salvage pathway; S-methyl-5-thio-alpha-D-ribose 1-phosphate from S-methyl-5'-thioadenosine (hydrolase route): step 1/2. In terms of biological role, catalyzes the irreversible cleavage of the glycosidic bond in both 5'-methylthioadenosine (MTA) and S-adenosylhomocysteine (SAH/AdoHcy) to adenine and the corresponding thioribose, 5'-methylthioribose and S-ribosylhomocysteine, respectively. Also cleaves 5'-deoxyadenosine, a toxic by-product of radical S-adenosylmethionine (SAM) enzymes, into 5-deoxyribose and adenine. This Aeromonas salmonicida (strain A449) protein is 5'-methylthioadenosine/S-adenosylhomocysteine nucleosidase.